The following is a 271-amino-acid chain: 2-aminophenol 1,6-dioxygenase alpha subunit (271 aa).

This sequence belongs to the LigB/MhpB extradiol dioxygenase family. Heterotetramer of 2 alpha and 2 beta subunits.

Its function is as follows. Component of the 2-aminophenol 1,6-dioxygenase complex that catalyzes the ring fission of 2-aminophenol to produce 2-aminomuconic 6-semialdehyde. AmnA seems to have a role in the stability of the complex. The polypeptide is 2-aminophenol 1,6-dioxygenase alpha subunit (amnA) (Pseudomonas sp).